Reading from the N-terminus, the 317-residue chain is tRNA dimethylallyltransferase (317 aa).

Position 14 to 21 (14 to 21 (GPTAVGKT)) interacts with ATP. 16-21 (TAVGKT) serves as a coordination point for substrate. Residues 39-42 (DSMQ) are interaction with substrate tRNA.

The protein belongs to the IPP transferase family. In terms of assembly, monomer. It depends on Mg(2+) as a cofactor.

It carries out the reaction adenosine(37) in tRNA + dimethylallyl diphosphate = N(6)-dimethylallyladenosine(37) in tRNA + diphosphate. Functionally, catalyzes the transfer of a dimethylallyl group onto the adenine at position 37 in tRNAs that read codons beginning with uridine, leading to the formation of N6-(dimethylallyl)adenosine (i(6)A). The sequence is that of tRNA dimethylallyltransferase from Bacillus cereus (strain AH820).